A 229-amino-acid chain; its full sequence is Cytidylate kinase (229 aa).

10-18 (GFSSCGKST) provides a ligand contact to ATP.

Belongs to the cytidylate kinase family. Type 1 subfamily.

The protein resides in the cytoplasm. The catalysed reaction is CMP + ATP = CDP + ADP. It carries out the reaction dCMP + ATP = dCDP + ADP. The polypeptide is Cytidylate kinase (Bacteroides thetaiotaomicron (strain ATCC 29148 / DSM 2079 / JCM 5827 / CCUG 10774 / NCTC 10582 / VPI-5482 / E50)).